A 435-amino-acid polypeptide reads, in one-letter code: Methylenetetrahydrofolate--tRNA-(uracil-5-)-methyltransferase TrmFO (435 aa).

FAD is bound at residue 10–15 (GAGLAG).

It belongs to the MnmG family. TrmFO subfamily. As to quaternary structure, homodimer. FAD is required as a cofactor.

Its subcellular location is the cytoplasm. It carries out the reaction uridine(54) in tRNA + (6R)-5,10-methylene-5,6,7,8-tetrahydrofolate + NADH + H(+) = 5-methyluridine(54) in tRNA + (6S)-5,6,7,8-tetrahydrofolate + NAD(+). The catalysed reaction is uridine(54) in tRNA + (6R)-5,10-methylene-5,6,7,8-tetrahydrofolate + NADPH + H(+) = 5-methyluridine(54) in tRNA + (6S)-5,6,7,8-tetrahydrofolate + NADP(+). Catalyzes the folate-dependent formation of 5-methyl-uridine at position 54 (M-5-U54) in all tRNAs. This chain is Methylenetetrahydrofolate--tRNA-(uracil-5-)-methyltransferase TrmFO, found in Bacillus subtilis (strain 168).